Consider the following 244-residue polypeptide: Membrane-spanning 4-domains subfamily A member 6B (244 aa).

Residues 1 to 46 (MIPQVVTSETVAMISPNGMSLPQTDKPQPFHQWQDSLKKHLKAEIK) lie on the Cytoplasmic side of the membrane. A helical transmembrane segment spans residues 47–67 (VMAAIQIMCAVMVLSLGIILA). Residues 68–84 (SVPSNLHFTSVFSVLLK) are Extracellular-facing. A helical membrane pass occupies residues 85–105 (SGYPFIGALFFIVSGILSIVT). Topologically, residues 106 to 121 (ETKSTKILVDSSLTLN) are cytoplasmic. Residues 122-142 (ILSVSFAFMGIIIISVSLAGL) form a helical membrane-spanning segment. Topologically, residues 143-176 (HPASEQCLQSKELRPTEYHYYQFLDRNECFAAKS) are extracellular. The chain crosses the membrane as a helical span at residues 177–197 (VLAGVFSLMLISTMLELGLAV). Over 198–244 (LTAMLWWKQSHSNIPGNVMFLPHSSNNDSNMESKVLCNPSYEEQLVC) the chain is Cytoplasmic.

This sequence belongs to the MS4A family. In terms of tissue distribution, expressed at high levels in thymus, spleen, and peripheral lymph nodes, with less abundant levels in non-lymphoid tissues.

It is found in the membrane. In terms of biological role, may be involved in signal transduction as a component of a multimeric receptor complex. This chain is Membrane-spanning 4-domains subfamily A member 6B (Ms4a6b), found in Mus musculus (Mouse).